A 262-amino-acid polypeptide reads, in one-letter code: 14-3-3 protein homolog (262 aa).

It belongs to the 14-3-3 family.

The chain is 14-3-3 protein homolog from Trichoderma harzianum (Hypocrea lixii).